The chain runs to 231 residues: Large ribosomal subunit protein uL1 (231 aa).

The protein belongs to the universal ribosomal protein uL1 family. In terms of assembly, part of the 50S ribosomal subunit.

Its function is as follows. Binds directly to 23S rRNA. The L1 stalk is quite mobile in the ribosome, and is involved in E site tRNA release. In terms of biological role, protein L1 is also a translational repressor protein, it controls the translation of the L11 operon by binding to its mRNA. In Stutzerimonas stutzeri (strain A1501) (Pseudomonas stutzeri), this protein is Large ribosomal subunit protein uL1.